Consider the following 395-residue polypeptide: GPI-anchor transamidase (395 aa).

The signal sequence occupies residues 1-27 (MVGTWFLCRGFTTLAGLLLLPFGSLAA). At 28–368 (SQIEDQAEQF…PKLKDWHPPG (341 aa)) the chain is on the lumenal side. Residues Asp79, Ile82, Glu118, and Asp120 each contribute to the Ca(2+) site. His164 (proton donor) is an active-site residue. Catalysis depends on Cys206, which acts as the Nucleophile; acyl-thioester intermediate. Residues Cys206, Ser232, and Ser234 each contribute to the a protein site. Residues 231–236 (DSLSHQ) form an autoinhibitory loop region. Cys275 and Cys280 form a disulfide bridge. Residues 369–385 (GFILGLWALIIMVFFKT) form a helical membrane-spanning segment. Topologically, residues 386-395 (YGIKHMKFIF) are cytoplasmic.

This sequence belongs to the peptidase C13 family. In terms of assembly, heteropentamer. Part of the GPI-anchor transamidase complex, consisting of PIGK, PIGT, PIGS, PIGU and GAA1. Interacts with GPAA1. Interacts with PIGT; this interaction, via a disulfide link, stabilizes the expression of GAA1 and PIGK and links them to PIGS. In terms of processing, the disulfide bond between PIGK/GPI8 and PIGT is important for normal enzyme activity.

Its subcellular location is the endoplasmic reticulum membrane. The protein operates within glycolipid biosynthesis; glycosylphosphatidylinositol-anchor biosynthesis. In the absence of proproteins substrates, exists in an inactive state with a disrupted catalytic site by an autoinhibitory loop. The binding of proprotein substrates, particularly the CSP region, to GPI-T triggers concerted conformational changes that alleviate the inhibition by the autoinhibitory loop. Meanwhile, proprotein residues near the omega- site induce the formation of a catalytic cleft for catalysis, following which the products are released and GPI-T reverts to the inactive state. Catalytic subunit of the glycosylphosphatidylinositol-anchor (GPI-anchor) transamidase (GPI-T) complex that catalyzes the formation of the linkage between a proprotein and a GPI-anchor and participates in GPI anchored protein biosynthesis. Recognizes diverse proproteins at a C-terminal signal peptide (CSP) region that lacks consensus sequence and replaces it with a GPI-anchor via a transamidation reaction. Transamidation catalysis reaction follows a two-phase mechanism. In the acyl-enzyme phase, the carbonyl group of the proproteins's omega-site undergoes a nucleophilic attack forming an enzyme-substrate thioester bond. Followed by a general acid catalysis that allows CSP releasing, regenerating the carbonyl, and forming the acyl-enzyme intermediate. In the GPI-anchor attachment phase, the amino group of the GPI-anchor's ethanolamine phosphate, the one on third mannose (EtNP3), mediates a nucleophilic attack on the carbonyl of the acyl-enzyme intermediate, replacing the CSP, allowing GPI-anchor attachment to the omega-residue, therefore forming the product and freeing the enzyme. In Sus scrofa (Pig), this protein is GPI-anchor transamidase.